Reading from the N-terminus, the 582-residue chain is Heterogeneous nuclear ribonucleoprotein C homolog (582 aa).

The segment at 1–21 is disordered; that stretch reads MSEALETGDPSPPPPIVSENG. C2H2-type zinc fingers lie at residues 102-125, 130-154, and 213-235; these read YYCC…RGYH, SSCD…RRTH, and YACL…VEMH.

It localises to the nucleus. The chain is Heterogeneous nuclear ribonucleoprotein C homolog from Caenorhabditis elegans.